We begin with the raw amino-acid sequence, 183 residues long: ATP synthase subunit b, chloroplastic (183 aa).

Residues D28–L48 form a helical membrane-spanning segment.

Belongs to the ATPase B chain family. As to quaternary structure, F-type ATPases have 2 components, F(1) - the catalytic core - and F(0) - the membrane proton channel. F(1) has five subunits: alpha(3), beta(3), gamma(1), delta(1), epsilon(1). F(0) has four main subunits: a(1), b(1), b'(1) and c(10-14). The alpha and beta chains form an alternating ring which encloses part of the gamma chain. F(1) is attached to F(0) by a central stalk formed by the gamma and epsilon chains, while a peripheral stalk is formed by the delta, b and b' chains.

It is found in the plastid. It localises to the chloroplast thylakoid membrane. Functionally, f(1)F(0) ATP synthase produces ATP from ADP in the presence of a proton or sodium gradient. F-type ATPases consist of two structural domains, F(1) containing the extramembraneous catalytic core and F(0) containing the membrane proton channel, linked together by a central stalk and a peripheral stalk. During catalysis, ATP synthesis in the catalytic domain of F(1) is coupled via a rotary mechanism of the central stalk subunits to proton translocation. Its function is as follows. Component of the F(0) channel, it forms part of the peripheral stalk, linking F(1) to F(0). In Porphyra purpurea (Red seaweed), this protein is ATP synthase subunit b, chloroplastic.